We begin with the raw amino-acid sequence, 247 residues long: Cell division protein ZapD (247 aa).

Belongs to the ZapD family. Interacts with FtsZ.

It localises to the cytoplasm. Cell division factor that enhances FtsZ-ring assembly. Directly interacts with FtsZ and promotes bundling of FtsZ protofilaments, with a reduction in FtsZ GTPase activity. The protein is Cell division protein ZapD of Shigella dysenteriae serotype 1 (strain Sd197).